Here is a 419-residue protein sequence, read N- to C-terminus: Appendage-associated protein (419 aa).

The N-terminal stretch at 1–39 (MIVTYGTVGCPVSRGGSPGCGRRIAEELRLAEDARLRLA) is a signal peptide. A coiled-coil region spans residues 232–262 (ERQKAQRRREERAAKAREELRKELNDIDAKW).

Its subcellular location is the secreted. Associates with actin filament appendages that are formed in the inclusion appendages of the parasitophorous vacuole during infection of the host erythrocyte. This is Appendage-associated protein from Anaplasma marginale (strain St. Maries).